The primary structure comprises 148 residues: Lysozyme-like protein 2 (148 aa).

An N-terminal signal peptide occupies residues 1–19 (MKAAGILTLIGCLVTGAES). In terms of domain architecture, C-type lysozyme spans 20 to 148 (KIYTRCKLAK…SDWKKDCEVS (129 aa)). Disulfide bonds link C25/C145, C49/C133, C83/C98, and C94/C112. E54 is a catalytic residue. N-linked (GlcNAc...) asparagine glycosylation is present at N58. D71 is a catalytic residue.

The protein belongs to the glycosyl hydrolase 22 family. As to quaternary structure, monomer. As to expression, expressed in testis, epididymis and placenta.

The protein localises to the secreted. It carries out the reaction Hydrolysis of (1-&gt;4)-beta-linkages between N-acetylmuramic acid and N-acetyl-D-glucosamine residues in a peptidoglycan and between N-acetyl-D-glucosamine residues in chitodextrins.. This is Lysozyme-like protein 2 (LYZL2) from Homo sapiens (Human).